The following is a 255-amino-acid chain: Hydroxyacylglutathione hydrolase (255 aa).

Zn(2+) is bound by residues H55, H57, D59, H60, H113, D132, and H170.

It belongs to the metallo-beta-lactamase superfamily. Glyoxalase II family. As to quaternary structure, monomer. Zn(2+) serves as cofactor.

It carries out the reaction an S-(2-hydroxyacyl)glutathione + H2O = a 2-hydroxy carboxylate + glutathione + H(+). It functions in the pathway secondary metabolite metabolism; methylglyoxal degradation; (R)-lactate from methylglyoxal: step 2/2. Thiolesterase that catalyzes the hydrolysis of S-D-lactoyl-glutathione to form glutathione and D-lactic acid. In Methylobacterium sp. (strain 4-46), this protein is Hydroxyacylglutathione hydrolase.